The sequence spans 117 residues: Transcription elongation factor A protein-like 8 (117 aa).

Basic and acidic residues-rich tracts occupy residues 1 to 10 and 61 to 75; these read MQKSCEENEG and FKED…PEEM. Positions 1-75 are disordered; that stretch reads MQKSCEENEG…PVRHLDPEEM (75 aa). Residues 73 to 100 adopt a coiled-coil conformation; the sequence is EEMIRGVDELERLREEIRRVRNKFVMMH.

Belongs to the TFS-II family. TFA subfamily.

The protein localises to the nucleus. May be involved in transcriptional regulation. The polypeptide is Transcription elongation factor A protein-like 8 (TCEAL8) (Homo sapiens (Human)).